Reading from the N-terminus, the 212-residue chain is Inactive ribonuclease-like protein 10 (212 aa).

An N-terminal signal peptide occupies residues 1–24 (MKLTLVQIFFMMLLLLLGLGVGLG).

This sequence belongs to the pancreatic ribonuclease family. In terms of processing, the N-terminus is blocked. Glycosylated. Male-specific expression in proximal caput of the epididymis.

The protein resides in the secreted. Functionally, secreted proximal epididymal protein required for post-testicular sperm maturation and male fertility. May be involved in sperm adhesion to the egg zona pellucida. Does not have ribonuclease activity. The sequence is that of Inactive ribonuclease-like protein 10 (RNASE10) from Ovis aries (Sheep).